A 125-amino-acid polypeptide reads, in one-letter code: Lymphocyte antigen 6 complex locus protein G6c (125 aa).

The signal sequence occupies residues 1–18; sequence MRALLLLSLSALLCWVSA. The 92-residue stretch at 20 to 111 folds into the UPAR/Ly6 domain; the sequence is IRCHSCYKLP…PRPTPALTLV (92 aa). Disulfide bonds link C22–C47, C25–C33, and C39–C65. N88 carries N-linked (GlcNAc...) asparagine glycosylation. C92 and C97 are disulfide-bonded. A lipid anchor (GPI-anchor amidated serine) is attached at S99. A propeptide spans 100–125 (removed in mature form); sequence PAPRPTPALTLVFLTSLAGLGLWLLH.

Post-translationally, N-glycosylated.

Its subcellular location is the cell membrane. The sequence is that of Lymphocyte antigen 6 complex locus protein G6c (LY6G6C) from Bos taurus (Bovine).